Reading from the N-terminus, the 85-residue chain is uncharacterized protein (85 aa).

This is an uncharacterized protein from Acidianus filamentous virus 2 (isolate Italy/Pozzuoli) (AFV-2).